Here is a 179-residue protein sequence, read N- to C-terminus: Large ribosomal subunit protein uL5 (179 aa).

This sequence belongs to the universal ribosomal protein uL5 family. In terms of assembly, part of the 50S ribosomal subunit; part of the 5S rRNA/L5/L18/L25 subcomplex. Contacts the 5S rRNA and the P site tRNA. Forms a bridge to the 30S subunit in the 70S ribosome.

In terms of biological role, this is one of the proteins that bind and probably mediate the attachment of the 5S RNA into the large ribosomal subunit, where it forms part of the central protuberance. In the 70S ribosome it contacts protein S13 of the 30S subunit (bridge B1b), connecting the 2 subunits; this bridge is implicated in subunit movement. Contacts the P site tRNA; the 5S rRNA and some of its associated proteins might help stabilize positioning of ribosome-bound tRNAs. The chain is Large ribosomal subunit protein uL5 from Prochlorococcus marinus (strain NATL1A).